The sequence spans 662 residues: DNA ligase (662 aa).

Residues 34 to 38 (DYEYD), 83 to 84 (SI), and E113 each bind NAD(+). The active-site N6-AMP-lysine intermediate is the K115. 4 residues coordinate NAD(+): R136, E172, K286, and K310. Zn(2+) is bound by residues C404, C407, C422, and C427. The 80-residue stretch at 583-662 (KSGSTCFGKA…EAFTNLIHLE (80 aa)) folds into the BRCT domain.

This sequence belongs to the NAD-dependent DNA ligase family. LigA subfamily. Mg(2+) serves as cofactor. It depends on Mn(2+) as a cofactor.

The catalysed reaction is NAD(+) + (deoxyribonucleotide)n-3'-hydroxyl + 5'-phospho-(deoxyribonucleotide)m = (deoxyribonucleotide)n+m + AMP + beta-nicotinamide D-nucleotide.. DNA ligase that catalyzes the formation of phosphodiester linkages between 5'-phosphoryl and 3'-hydroxyl groups in double-stranded DNA using NAD as a coenzyme and as the energy source for the reaction. It is essential for DNA replication and repair of damaged DNA. The polypeptide is DNA ligase (Chlamydia pneumoniae (Chlamydophila pneumoniae)).